The sequence spans 119 residues: Holo-[acyl-carrier-protein] synthase (119 aa).

Mg(2+) contacts are provided by D5 and E51.

The protein belongs to the P-Pant transferase superfamily. AcpS family. Requires Mg(2+) as cofactor.

Its subcellular location is the cytoplasm. It carries out the reaction apo-[ACP] + CoA = holo-[ACP] + adenosine 3',5'-bisphosphate + H(+). In terms of biological role, transfers the 4'-phosphopantetheine moiety from coenzyme A to a Ser of acyl-carrier-protein. The polypeptide is Holo-[acyl-carrier-protein] synthase (Helicobacter pylori (strain G27)).